The primary structure comprises 1025 residues: Multidrug resistance protein MdtC (1025 aa).

The next 12 helical transmembrane spans lie at 3–23 (FFAL…AITL), 333–353 (EVEQ…FLFL), 360–380 (IIPA…MYLC), 387–407 (LSLM…IVVL), 431–451 (VGFT…PLLL), 463–483 (FAVT…TLTP), 528–548 (LVGV…ISIP), 853–873 (VILI…LYES), 875–895 (VHPL…LLAL), 897–917 (LFNA…IGIV), 953–973 (PIMM…LSGG), and 984–1004 (ITIV…TPVV).

It belongs to the resistance-nodulation-cell division (RND) (TC 2.A.6) family. MdtC subfamily. As to quaternary structure, part of a tripartite efflux system composed of MdtA, MdtB and MdtC. MdtC forms a heteromultimer with MdtB.

It is found in the cell inner membrane. Its function is as follows. The MdtABC tripartite complex confers resistance against novobiocin and deoxycholate. The polypeptide is Multidrug resistance protein MdtC (Escherichia coli O127:H6 (strain E2348/69 / EPEC)).